The chain runs to 538 residues: Putative cysteine ligase BshC (538 aa).

Positions 248–268 (ISKYKEVQEGLRNQQEVIKEL) form a coiled coil.

It belongs to the BshC family.

In terms of biological role, involved in bacillithiol (BSH) biosynthesis. May catalyze the last step of the pathway, the addition of cysteine to glucosamine malate (GlcN-Mal) to generate BSH. The chain is Putative cysteine ligase BshC from Bacillus cereus (strain B4264).